The following is a 312-amino-acid chain: Homoserine O-acetyltransferase (312 aa).

The active-site Acyl-thioester intermediate is the Cys-142. Substrate contacts are provided by Lys-163 and Ser-192. Catalysis depends on His-235, which acts as the Proton acceptor. The active site involves Glu-237. Arg-249 contributes to the substrate binding site.

This sequence belongs to the MetA family.

The protein localises to the cytoplasm. The enzyme catalyses L-homoserine + acetyl-CoA = O-acetyl-L-homoserine + CoA. The protein operates within amino-acid biosynthesis; L-methionine biosynthesis via de novo pathway; O-acetyl-L-homoserine from L-homoserine: step 1/1. Its function is as follows. Transfers an acetyl group from acetyl-CoA to L-homoserine, forming acetyl-L-homoserine. This Chelativorans sp. (strain BNC1) protein is Homoserine O-acetyltransferase.